A 92-amino-acid chain; its full sequence is Small ribosomal subunit protein uS19c (92 aa).

The protein belongs to the universal ribosomal protein uS19 family.

It is found in the plastid. Its function is as follows. Protein S19 forms a complex with S13 that binds strongly to the 16S ribosomal RNA. The polypeptide is Small ribosomal subunit protein uS19c (Cuscuta reflexa (Southern Asian dodder)).